We begin with the raw amino-acid sequence, 186 residues long: DNA-directed RNA polymerase 22 kDa subunit (186 aa).

This sequence belongs to the poxviridae DNA-directed RNA polymerase 22 kDa subunit family. The DNA-dependent RNA polymerase used for intermediate and late genes expression consists of eight subunits Rpo30/OPG66, Rpo7/OPG90, Rpo22/OPG103, Rpo147/OPG105, Rpo18/OPG119, Rpo19/OPG131, Rpo132/OPG151 and Rpo35/OPG156. The same holoenzyme, with the addition of the transcription-specificity factor OPG109, is used for early gene expression.

Its subcellular location is the virion. It catalyses the reaction RNA(n) + a ribonucleoside 5'-triphosphate = RNA(n+1) + diphosphate. In terms of biological role, part of the DNA-dependent RNA polymerase which catalyzes the transcription of viral DNA into RNA using the four ribonucleoside triphosphates as substrates. Responsible for the transcription of early, intermediate and late genes. DNA-dependent RNA polymerase associates with the early transcription factor (ETF), itself composed of OPG118 and OPG133, thereby allowing the early genes transcription. Late transcription, and probably also intermediate transcription, require newly synthesized RNA polymerase. This Vertebrata (FPV) protein is DNA-directed RNA polymerase 22 kDa subunit (OPG103).